A 316-amino-acid chain; its full sequence is 4-hydroxy-3-methylbut-2-enyl diphosphate reductase (316 aa).

[4Fe-4S] cluster is bound at residue Cys-12. (2E)-4-hydroxy-3-methylbut-2-enyl diphosphate contacts are provided by His-41 and His-74. Residues His-41 and His-74 each contribute to the dimethylallyl diphosphate site. 2 residues coordinate isopentenyl diphosphate: His-41 and His-74. Residue Cys-96 participates in [4Fe-4S] cluster binding. His-124 lines the (2E)-4-hydroxy-3-methylbut-2-enyl diphosphate pocket. His-124 provides a ligand contact to dimethylallyl diphosphate. His-124 contributes to the isopentenyl diphosphate binding site. Glu-126 functions as the Proton donor in the catalytic mechanism. A (2E)-4-hydroxy-3-methylbut-2-enyl diphosphate-binding site is contributed by Thr-167. A [4Fe-4S] cluster-binding site is contributed by Cys-197. Residues Ser-225, Ser-226, Asn-227, and Ser-269 each coordinate (2E)-4-hydroxy-3-methylbut-2-enyl diphosphate. 4 residues coordinate dimethylallyl diphosphate: Ser-225, Ser-226, Asn-227, and Ser-269. The isopentenyl diphosphate site is built by Ser-225, Ser-226, Asn-227, and Ser-269.

The protein belongs to the IspH family. As to quaternary structure, homodimer. [4Fe-4S] cluster is required as a cofactor.

It carries out the reaction isopentenyl diphosphate + 2 oxidized [2Fe-2S]-[ferredoxin] + H2O = (2E)-4-hydroxy-3-methylbut-2-enyl diphosphate + 2 reduced [2Fe-2S]-[ferredoxin] + 2 H(+). The catalysed reaction is dimethylallyl diphosphate + 2 oxidized [2Fe-2S]-[ferredoxin] + H2O = (2E)-4-hydroxy-3-methylbut-2-enyl diphosphate + 2 reduced [2Fe-2S]-[ferredoxin] + 2 H(+). Its pathway is isoprenoid biosynthesis; dimethylallyl diphosphate biosynthesis; dimethylallyl diphosphate from (2E)-4-hydroxy-3-methylbutenyl diphosphate: step 1/1. The protein operates within isoprenoid biosynthesis; isopentenyl diphosphate biosynthesis via DXP pathway; isopentenyl diphosphate from 1-deoxy-D-xylulose 5-phosphate: step 6/6. Its function is as follows. Catalyzes the conversion of 1-hydroxy-2-methyl-2-(E)-butenyl 4-diphosphate (HMBPP) into a mixture of isopentenyl diphosphate (IPP) and dimethylallyl diphosphate (DMAPP). Acts in the terminal step of the DOXP/MEP pathway for isoprenoid precursor biosynthesis. The chain is 4-hydroxy-3-methylbut-2-enyl diphosphate reductase from Salmonella paratyphi B (strain ATCC BAA-1250 / SPB7).